A 186-amino-acid chain; its full sequence is Putative manganese efflux pump MntP (186 aa).

Helical transmembrane passes span 5–25 (VLIG…MDAF), 41–61 (VFQI…GGMI), 72–92 (ALAG…MIVA), 107–127 (FGLF…GLSL), 135–155 (ILTI…GLLL), and 166–186 (YSEA…LLPI).

Belongs to the MntP (TC 9.B.29) family.

It is found in the cell membrane. Its function is as follows. Probably functions as a manganese efflux pump. The chain is Putative manganese efflux pump MntP from Bacillus licheniformis (strain ATCC 14580 / DSM 13 / JCM 2505 / CCUG 7422 / NBRC 12200 / NCIMB 9375 / NCTC 10341 / NRRL NRS-1264 / Gibson 46).